We begin with the raw amino-acid sequence, 406 residues long: Peptide chain release factor PrfB3, chloroplastic (406 aa).

It belongs to the prokaryotic/mitochondrial release factor family. In terms of assembly, interacts with PDE338.

The protein resides in the plastid. It is found in the chloroplast stroma. It localises to the chloroplast. Its function is as follows. Involved in the light- and stress-dependent regulation of stability of 3' processed petB transcripts, thus regulating cytochrome b6 accumulation, a rate-limiting step in photosynthetic electron transport. May be recruited to specifically protect petB transcripts against 3'-5' exonucleolytic attack by masking the 3' ends. Does not function as release factor. In Arabidopsis thaliana (Mouse-ear cress), this protein is Peptide chain release factor PrfB3, chloroplastic.